The sequence spans 185 residues: Ribosome-recycling factor (185 aa).

This sequence belongs to the RRF family.

Its subcellular location is the cytoplasm. Functionally, responsible for the release of ribosomes from messenger RNA at the termination of protein biosynthesis. May increase the efficiency of translation by recycling ribosomes from one round of translation to another. The protein is Ribosome-recycling factor of Streptococcus thermophilus (strain CNRZ 1066).